The chain runs to 320 residues: Heptaprenyl diphosphate synthase component 2 (320 aa).

Isopentenyl diphosphate contacts are provided by Lys-45, Arg-48, and His-77. Residues Asp-84 and Asp-88 each coordinate Mg(2+). Arg-93 is an all-trans-hexaprenyl diphosphate binding site. Arg-94 contributes to the isopentenyl diphosphate binding site. Residues Lys-170, Thr-171, and Gln-208 each contribute to the all-trans-hexaprenyl diphosphate site.

Belongs to the FPP/GGPP synthase family. Heterodimer of component I and II. Mg(2+) is required as a cofactor.

It catalyses the reaction 4 isopentenyl diphosphate + (2E,6E)-farnesyl diphosphate = all-trans-heptaprenyl diphosphate + 4 diphosphate. Functionally, supplies heptaprenyl diphosphate, the precursor for the side chain of the isoprenoid quinone menaquinone-7 (MQ-7). The protein is Heptaprenyl diphosphate synthase component 2 (hepT) of Geobacillus stearothermophilus (Bacillus stearothermophilus).